Consider the following 223-residue polypeptide: Glutathione S-transferase Z2 (223 aa).

The 82-residue stretch at 10–91 folds into the GST N-terminal domain; it reads AKLKLYSYWR…YLDDKYPEPP (82 aa). Glutathione contacts are provided by residues 20–21, 20–25, Q49, 49–50, 62–63, V63, 75–76, Q115, and 119–121; these read SS, SSCAHR, QS, TV, DS, and NMA. The GST C-terminal domain occupies 96–221; that stretch reads DYHKRAVNYQ…VPEKQPDTPS (126 aa).

Belongs to the GST superfamily. Zeta family.

It localises to the cytoplasm. It is found in the cytosol. The enzyme catalyses RX + glutathione = an S-substituted glutathione + a halide anion + H(+). In terms of biological role, may be involved in the conjugation of reduced glutathione to a wide number of exogenous and endogenous hydrophobic electrophiles and have a detoxification role against certain herbicides. The polypeptide is Glutathione S-transferase Z2 (GSTZ2) (Arabidopsis thaliana (Mouse-ear cress)).